The chain runs to 459 residues: V-type ATP synthase beta chain (459 aa).

Belongs to the ATPase alpha/beta chains family.

Functionally, produces ATP from ADP in the presence of a proton gradient across the membrane. The V-type beta chain is a regulatory subunit. This Thermoanaerobacter pseudethanolicus (strain ATCC 33223 / 39E) (Clostridium thermohydrosulfuricum) protein is V-type ATP synthase beta chain.